The sequence spans 533 residues: Beta-glucosidase 10 (533 aa).

An N-terminal signal peptide occupies residues 1-23; that stretch reads MAVAGAMVMSGGVLLLLLAFTCA. An a beta-D-glucoside-binding site is contributed by Gln-53. Asn-122 carries N-linked (GlcNAc...) asparagine glycosylation. Residues His-157 and 202–203 each bind a beta-D-glucoside; that span reads NE. The Proton donor role is filled by Glu-203. A disulfide bridge links Cys-222 with Cys-230. Tyr-369 serves as a coordination point for a beta-D-glucoside. Asn-384 carries an N-linked (GlcNAc...) asparagine glycan. Residue Glu-440 coordinates a beta-D-glucoside. The Nucleophile role is filled by Glu-440. N-linked (GlcNAc...) asparagine glycosylation occurs at Asn-448. Residues Trp-489, 496–497, and Phe-505 each bind a beta-D-glucoside; that span reads EW.

This sequence belongs to the glycosyl hydrolase 1 family.

The enzyme catalyses Hydrolysis of terminal, non-reducing beta-D-glucosyl residues with release of beta-D-glucose.. The chain is Beta-glucosidase 10 (BGLU10) from Oryza sativa subsp. japonica (Rice).